The sequence spans 230 residues: Bidirectional sugar transporter SWEET16 (230 aa).

Over 1-3 the chain is Extracellular; the sequence is MAD. Residues 4-24 form a helical membrane-spanning segment; sequence LSFYVGVIGNVISVLVFLSPV. Residues 6-92 form the MtN3/slv 1 domain; the sequence is FYVGVIGNVI…LIFLFFVPKS (87 aa). The Cytoplasmic portion of the chain corresponds to 25-40; the sequence is ETFWRIVQRRSTEEYE. Residues 41–61 form a helical membrane-spanning segment; the sequence is CFPYICTLMSSSLWTYYGIVT. At 62 to 69 the chain is on the extracellular side; it reads PGEYLVST. A helical membrane pass occupies residues 70 to 90; sequence VNGFGALAESIYVLIFLFFVP. The Cytoplasmic portion of the chain corresponds to 91 to 93; that stretch reads KSR. Residues 94–114 traverse the membrane as a helical segment; sequence FLKTVVVVLALNVCFPVIAIA. Residues 115-128 lie on the Extracellular side of the membrane; it reads GTRTLFGDANSRSS. The helical transmembrane segment at 129–149 threads the bilayer; the sequence is SMGFICATLNIIMYGSPLSAI. The region spanning 129-212 is the MtN3/slv 2 domain; that stretch reads SMGFICATLN…LLIYAYYRNA (84 aa). At 150-162 the chain is on the cytoplasmic side; the sequence is KTVVTTRSVQFMP. Residues 163–183 traverse the membrane as a helical segment; that stretch reads FWLSFFLFLNGAIWGVYALLL. At 184–185 the chain is on the extracellular side; sequence HD. Residues 186–206 traverse the membrane as a helical segment; it reads MFLLVPNGMGFFLGIMQLLIY. Over 207–230 the chain is Cytoplasmic; sequence AYYRNAEPIVEDEEGLIPNQPLLA.

Belongs to the SWEET sugar transporter family. In terms of assembly, forms homooligomers and heterooligomers with SWEET1, SWEET7, SWEET8, SWEET9 and SWEET17. In terms of tissue distribution, mostly expressed in the cortex of mature roots, and, to a lower extent, in aerial organs such as leaves, stems, and flowers. Mainly present in vascular parenchyma cells, especially in the petiole vasculature, flower stalks and at the base of individual, not fully developed flowers.

It localises to the vacuole membrane. Functionally, mediates both low-affinity uptake and efflux of sugar across the vacuolar membrane. Regulates sugars homeostasis in leaves and roots by exporting/importing them through the tonoplast regarding metabolic demand. Acts as a vacuolar hexose transporter, such as glucose (Glc), fructose (Fru), and sucrose (Suc). This chain is Bidirectional sugar transporter SWEET16, found in Arabidopsis thaliana (Mouse-ear cress).